Consider the following 130-residue polypeptide: Small ribosomal subunit protein uS9 (130 aa).

It belongs to the universal ribosomal protein uS9 family.

This Salmonella paratyphi C (strain RKS4594) protein is Small ribosomal subunit protein uS9.